The chain runs to 81 residues: Photosystem I iron-sulfur center (81 aa).

4Fe-4S ferredoxin-type domains follow at residues 2–31 (SHTV…MVPW) and 37–68 (GQIA…VRVY). The [4Fe-4S] cluster site is built by C11, C14, C17, C21, C48, C51, C54, and C58.

As to quaternary structure, the eukaryotic PSI reaction center is composed of at least 11 subunits. The cofactor is [4Fe-4S] cluster.

It is found in the plastid. It localises to the chloroplast thylakoid membrane. The catalysed reaction is reduced [plastocyanin] + hnu + oxidized [2Fe-2S]-[ferredoxin] = oxidized [plastocyanin] + reduced [2Fe-2S]-[ferredoxin]. Its function is as follows. Apoprotein for the two 4Fe-4S centers FA and FB of photosystem I (PSI); essential for photochemical activity. FB is the terminal electron acceptor of PSI, donating electrons to ferredoxin. The C-terminus interacts with PsaA/B/D and helps assemble the protein into the PSI complex. Required for binding of PsaD and PsaE to PSI. PSI is a plastocyanin/cytochrome c6-ferredoxin oxidoreductase, converting photonic excitation into a charge separation, which transfers an electron from the donor P700 chlorophyll pair to the spectroscopically characterized acceptors A0, A1, FX, FA and FB in turn. This Phaeodactylum tricornutum (strain CCAP 1055/1) protein is Photosystem I iron-sulfur center.